We begin with the raw amino-acid sequence, 822 residues long: IQ and AAA domain-containing protein 1-like (822 aa).

The region spanning 206–235 (QDQGAIVIQKVWKGYLQRKRIEQDRRMEME) is the IQ domain. The span at 338–363 (RQELEAQAQENKKKEQEKNKDKVKEK) shows a compositional bias: basic and acidic residues. 2 disordered regions span residues 338–378 (RQEL…KAKK) and 457–484 (REET…KDLT). The span at 464-479 (KSPKKKGGKKSGKKKK) shows a compositional bias: basic residues. 569–576 (GPSGMGKK) contributes to the ATP binding site.

It belongs to the AAA ATPase family.

This chain is IQ and AAA domain-containing protein 1-like (Iqca1l), found in Rattus norvegicus (Rat).